Here is a 107-residue protein sequence, read N- to C-terminus: Thioredoxin 1 (107 aa).

The region spanning 2–107 is the Thioredoxin domain; that stretch reads SVAAAVTDAT…TLANTLDKHL (106 aa). A disulfide bond links cysteine 32 and cysteine 35.

Belongs to the thioredoxin family.

Functionally, participates in various redox reactions through the reversible oxidation of its active center dithiol to a disulfide and catalyzes dithiol-disulfide exchange reactions. This chain is Thioredoxin 1 (trxA), found in Synechococcus elongatus (strain ATCC 33912 / PCC 7942 / FACHB-805) (Anacystis nidulans R2).